We begin with the raw amino-acid sequence, 344 residues long: Beta-1,4-galactosyltransferase 4 (344 aa).

Residues 1–12 (MGCNPPYLLPYR) lie on the Cytoplasmic side of the membrane. Residues 13 to 38 (LRLLLFFTLCLTVVGWVTSNYFVDPI) traverse the membrane as a helical; Signal-anchor for type II membrane protein segment. Over 39 to 344 (QVIPKAKVFM…NITVDFWTGV (306 aa)) the chain is Lumenal. An intrachain disulfide couples cysteine 77 to cysteine 118. UDP-alpha-D-galactose contacts are provided by residues 129-133 (PHRNR), 168-170 (FNR), and 195-196 (VD). Cysteines 189 and 208 form a disulfide. Position 196 (aspartate 196) interacts with Mn(2+). N-linked (GlcNAc...) asparagine glycosylation is present at asparagine 220. UDP-alpha-D-galactose is bound by residues tyrosine 224 and tryptophan 256. 258–261 (GEDD) contacts N-acetyl-D-glucosamine. A Mn(2+)-binding site is contributed by histidine 289. 289–291 (HTR) contacts UDP-alpha-D-galactose. Arginine 301 contacts N-acetyl-D-glucosamine. A glycan (N-linked (GlcNAc...) asparagine) is linked at asparagine 335.

It belongs to the glycosyltransferase 7 family. Requires Mn(2+) as cofactor.

It localises to the golgi apparatus. Its subcellular location is the golgi stack membrane. It catalyses the reaction N-acetyl-D-glucosamine + UDP-alpha-D-galactose = beta-D-galactosyl-(1-&gt;4)-N-acetyl-D-glucosamine + UDP + H(+). The enzyme catalyses a beta-D-GlcNAc-(1-&gt;3)-beta-D-Gal-(1-&gt;4)-beta-D-Glc-(1&lt;-&gt;1)-Cer(d18:1(4E)) + UDP-alpha-D-galactose = a neolactoside nLc4Cer(d18:1(4E)) + UDP + H(+). Its pathway is protein modification; protein glycosylation. Galactose (Gal) transferase involved in the biosynthesis of glycoproteins, proteoglycans, and glycosyphingolipids. Catalyzes the transfer of Gal residue via a beta1-&gt;4 linkage from UDP-Gal to the non-reducing terminal N-acetyl glucosamine 6-O-sulfate (6-O-sulfoGlcNAc) in the linearly growing chain of both N- and O-linked keratan sulfate proteoglycans. Cooperates with B3GNT7 N-acetyl glucosamine transferase and CHST6 and CHST1 sulfotransferases to construct and elongate mono- and disulfated disaccharide units [-&gt;3Galbeta1-&gt;4(6-sulfoGlcNAcbeta)1-&gt;] and [-&gt;3(6-sulfoGalbeta)1-&gt;4(6-sulfoGlcNAcbeta)1-&gt;] within keratan sulfate polymer. This chain is Beta-1,4-galactosyltransferase 4 (B4GALT4), found in Cricetulus griseus (Chinese hamster).